The chain runs to 426 residues: Serine--tRNA ligase (426 aa).

231-233 (TSE) provides a ligand contact to L-serine. 262 to 264 (RSE) is an ATP binding site. Glu285 lines the L-serine pocket. 349–352 (EISS) contacts ATP. An L-serine-binding site is contributed by Ser385.

The protein belongs to the class-II aminoacyl-tRNA synthetase family. Type-1 seryl-tRNA synthetase subfamily. As to quaternary structure, homodimer. The tRNA molecule binds across the dimer.

It is found in the cytoplasm. The enzyme catalyses tRNA(Ser) + L-serine + ATP = L-seryl-tRNA(Ser) + AMP + diphosphate + H(+). It catalyses the reaction tRNA(Sec) + L-serine + ATP = L-seryl-tRNA(Sec) + AMP + diphosphate + H(+). It participates in aminoacyl-tRNA biosynthesis; selenocysteinyl-tRNA(Sec) biosynthesis; L-seryl-tRNA(Sec) from L-serine and tRNA(Sec): step 1/1. Its function is as follows. Catalyzes the attachment of serine to tRNA(Ser). Is also able to aminoacylate tRNA(Sec) with serine, to form the misacylated tRNA L-seryl-tRNA(Sec), which will be further converted into selenocysteinyl-tRNA(Sec). This chain is Serine--tRNA ligase, found in Legionella pneumophila (strain Corby).